A 68-amino-acid chain; its full sequence is Conotoxin tx3b (68 aa).

An N-terminal signal peptide occupies residues 1–19; that stretch reads MSKLGALLTICLLLFSLTA. A propeptide spanning residues 20 to 52 is cleaved from the precursor; it reads VPLDGDQHADQPAQRLQDRIPTEDHPLFDPNKR. 3 cysteine pairs are disulfide-bonded: cysteine 53/cysteine 67, cysteine 54/cysteine 63, and cysteine 59/cysteine 66. Methionine sulfoxide; partial is present on methionine 61. A Cysteine amide modification is found at cysteine 67.

Expressed by the venom duct.

The protein resides in the secreted. Its function is as follows. Intracranial injection into mice causes scratching, hyperactivity and circular motion. The chain is Conotoxin tx3b from Conus textile (Cloth-of-gold cone).